The sequence spans 139 residues: ATP synthase epsilon chain (139 aa).

Belongs to the ATPase epsilon chain family. F-type ATPases have 2 components, CF(1) - the catalytic core - and CF(0) - the membrane proton channel. CF(1) has five subunits: alpha(3), beta(3), gamma(1), delta(1), epsilon(1). CF(0) has three main subunits: a, b and c.

The protein resides in the cell inner membrane. Its function is as follows. Produces ATP from ADP in the presence of a proton gradient across the membrane. In Marinomonas sp. (strain MWYL1), this protein is ATP synthase epsilon chain.